The primary structure comprises 307 residues: Acetaldehyde dehydrogenase 2 (307 aa).

Residue 13-16 (SGNI) coordinates NAD(+). C132 (acyl-thioester intermediate) is an active-site residue. Residues 163-171 (SIGPGTRAN) and N274 each bind NAD(+).

This sequence belongs to the acetaldehyde dehydrogenase family.

The enzyme catalyses acetaldehyde + NAD(+) + CoA = acetyl-CoA + NADH + H(+). In Methylibium petroleiphilum (strain ATCC BAA-1232 / LMG 22953 / PM1), this protein is Acetaldehyde dehydrogenase 2.